The chain runs to 134 residues: Histone H2B (134 aa).

The span at 1–10 (MSDKASTPKK) shows a compositional bias: polar residues. 2 disordered regions span residues 1–29 (MSDK…EAKK) and 113–134 (VSEG…SKSR). Positions 12–29 (ATKDATKPKKVGDEEAKK) are enriched in basic and acidic residues. Polar residues predominate over residues 125–134 (GQPTSGSKSR).

Belongs to the histone H2B family. In terms of assembly, the nucleosome is a histone octamer containing two molecules each of H2A, H2B, H3 and H4 assembled in one H3-H4 heterotetramer and two H2A-H2B heterodimers. The octamer wraps approximately 147 bp of DNA.

Its subcellular location is the nucleus. It localises to the chromosome. In terms of biological role, core component of nucleosome. Nucleosomes wrap and compact DNA into chromatin, limiting DNA accessibility to the cellular machineries which require DNA as a template. Histones thereby play a central role in transcription regulation, DNA repair, DNA replication and chromosomal stability. DNA accessibility is regulated via a complex set of post-translational modifications of histones, also called histone code, and nucleosome remodeling. The polypeptide is Histone H2B (Entamoeba invadens).